Reading from the N-terminus, the 438-residue chain is Tol-Pal system protein TolB (438 aa).

Residues 1–36 form the signal peptide; sequence MTPAFRRADLTGFLRTYGAALILLLAAMLAWQPAQA.

The protein belongs to the TolB family. The Tol-Pal system is composed of five core proteins: the inner membrane proteins TolA, TolQ and TolR, the periplasmic protein TolB and the outer membrane protein Pal. They form a network linking the inner and outer membranes and the peptidoglycan layer.

The protein resides in the periplasm. Functionally, part of the Tol-Pal system, which plays a role in outer membrane invagination during cell division and is important for maintaining outer membrane integrity. This Bordetella pertussis (strain Tohama I / ATCC BAA-589 / NCTC 13251) protein is Tol-Pal system protein TolB.